Here is a 762-residue protein sequence, read N- to C-terminus: 5-methyltetrahydropteroyltriglutamate--homocysteine methyltransferase (762 aa).

5-methyltetrahydropteroyltri-L-glutamate-binding positions include 17–20 (REWK) and Lys111. Residues 435-437 (IGS) and Glu488 each bind L-homocysteine. L-methionine is bound by residues 435–437 (IGS) and Glu488. 5-methyltetrahydropteroyltri-L-glutamate is bound by residues 519–520 (RC) and Trp565. Asp603 is an L-homocysteine binding site. Asp603 contacts L-methionine. A 5-methyltetrahydropteroyltri-L-glutamate-binding site is contributed by Glu609. Residues His645, Cys647, and Glu669 each contribute to the Zn(2+) site. Catalysis depends on His698, which acts as the Proton donor. Position 730 (Cys730) interacts with Zn(2+).

This sequence belongs to the vitamin-B12 independent methionine synthase family. Requires Zn(2+) as cofactor.

It carries out the reaction 5-methyltetrahydropteroyltri-L-glutamate + L-homocysteine = tetrahydropteroyltri-L-glutamate + L-methionine. It participates in amino-acid biosynthesis; L-methionine biosynthesis via de novo pathway; L-methionine from L-homocysteine (MetE route): step 1/1. Functionally, catalyzes the transfer of a methyl group from 5-methyltetrahydrofolate to homocysteine resulting in methionine formation. The sequence is that of 5-methyltetrahydropteroyltriglutamate--homocysteine methyltransferase from Bacillus cereus (strain AH187).